Reading from the N-terminus, the 179-residue chain is Cytochrome b6-f complex iron-sulfur subunit (179 aa).

Residues 21–43 (LLTFGTVTGVALGALYPVVNYFI) form a helical membrane-spanning segment. Residues 61-162 (GNDVSVTKFL…TNVSDDKIVL (102 aa)) enclose the Rieske domain. [2Fe-2S] cluster is bound by residues Cys108, His110, Cys126, and His129. Residues Cys113 and Cys128 are joined by a disulfide bond.

This sequence belongs to the Rieske iron-sulfur protein family. As to quaternary structure, the 4 large subunits of the cytochrome b6-f complex are cytochrome b6, subunit IV (17 kDa polypeptide, PetD), cytochrome f and the Rieske protein, while the 4 small subunits are PetG, PetL, PetM and PetN. The complex functions as a dimer. Requires [2Fe-2S] cluster as cofactor.

The protein localises to the cellular thylakoid membrane. The enzyme catalyses 2 oxidized [plastocyanin] + a plastoquinol + 2 H(+)(in) = 2 reduced [plastocyanin] + a plastoquinone + 4 H(+)(out). In terms of biological role, component of the cytochrome b6-f complex, which mediates electron transfer between photosystem II (PSII) and photosystem I (PSI), cyclic electron flow around PSI, and state transitions. The protein is Cytochrome b6-f complex iron-sulfur subunit of Nostoc punctiforme (strain ATCC 29133 / PCC 73102).